A 615-amino-acid chain; its full sequence is Zinc finger protein 653 (615 aa).

Disordered stretches follow at residues 1–48, 95–117, 176–236, and 401–432; these read MAER…ARRR, RSGRHGKPWEQVPKKPKRKKRRR, PLSD…SSGL, and EEKEEPVAPELATTVPESAEPEAEADGEELDG. The short motif at 107–118 is the Nuclear localization signal element; the sequence is PKKPKRKKRRRR. Basic residues predominate over residues 108-117; that stretch reads KKPKRKKRRR. A compositionally biased stretch (low complexity) spans 193–205; that stretch reads AGSSDSSSSGSAS. Polar residues predominate over residues 226–236; the sequence is TPTSPVGSSGL. A compositionally biased stretch (acidic residues) spans 419–432; the sequence is AEPEAEADGEELDG. Residues 445–451 carry the Nuclear localization signal motif; that stretch reads EPEKRRR. C2H2-type zinc fingers lie at residues 467-492, 498-522, 528-550, 556-578, and 586-609; these read FHCPYEGCSQVYVALSSFQNHVNLVH, KVCPHPGCGKKFYLSNHLRRHMIIH, FTCETCGKSFKRKNHLEVHRRTH, LQCEICGYQCRQRASLNWHMKKH, and FTCDRCGKRFEKLDSVKFHTLKSH.

This sequence belongs to the krueppel C2H2-type zinc-finger protein family. In terms of assembly, interacts with NR5A1. In terms of tissue distribution, highly expressed in testis, cerebellum, temporal lobe, hippocampus and the adrenal gland. Moderately expressed in spleen, uterus, thymus, pancreas, kidney, stomach and rectum.

It localises to the nucleus. Functionally, transcriptional repressor. May repress NR5A1, PPARG, NR1H3, NR4A2, ESR1 and NR3C1 transcriptional activity. This Homo sapiens (Human) protein is Zinc finger protein 653 (ZNF653).